The chain runs to 949 residues: Piwi-like protein 2 (949 aa).

A disordered region spans residues 1-125; the sequence is MDPTRPPFRG…SLSTRVQQAS (125 aa). The segment covering 115 to 125 has biased composition (polar residues); it reads PSLSTRVQQAS. Residues 366–478 form the PAZ domain; it reads SVLDIMNILY…LLPELAFMTG (113 aa). Positions 644–935 constitute a Piwi domain; the sequence is LLVCLISGTR…LAFLSGQFLH (292 aa). Active-site residues include Asp721, Glu759, Asp791, and His924.

It belongs to the argonaute family. Piwi subfamily. Component of the PET complex. It depends on Mg(2+) as a cofactor. Methylated on arginine residues; required for the interaction with Tudor domain-containing protein and subsequent localization to the meiotic nuage, also named P granule. In terms of tissue distribution, expressed in oocytes, testis and liver (at protein level).

The protein resides in the cytoplasm. Its subcellular location is the nucleus. In terms of biological role, endoribonuclease that plays a central role during spermatogenesis by repressing transposable elements and preventing their mobilization, which is essential for the germline integrity. Plays an essential role in meiotic differentiation of spermatocytes, germ cell differentiation and in self-renewal of spermatogonial stem cells. Acts via the piRNA metabolic process, which mediates the repression of transposable elements during meiosis by forming complexes composed of piRNAs and Piwi proteins and govern the methylation and subsequent repression of transposons. During piRNA biosynthesis, plays a key role in the piRNA amplification loop, also named ping-pong amplification cycle, by acting as a 'slicer-competent' piRNA endoribonuclease that cleaves primary piRNAs, which are then loaded onto 'slicer-incompetent' piwil4. Piwil2 slicing produces a pre-miRNA intermediate, which is then processed in mature piRNAs, and as well as a 16 nucleotide by-product that is degraded. Required for piwil4/miwi2 nuclear localization and association with secondary piRNAs antisense. Represses circadian rhythms by promoting the stability and activity of core clock components BMAL1 and CLOCK. This chain is Piwi-like protein 2 (piwil2), found in Xenopus tropicalis (Western clawed frog).